Here is a 436-residue protein sequence, read N- to C-terminus: UPF0597 protein YhaM (436 aa).

The protein belongs to the UPF0597 family.

The protein is UPF0597 protein YhaM of Escherichia coli (strain 55989 / EAEC).